Consider the following 312-residue polypeptide: MKVAVLGAAGGIGQALALLLKTQLPSGSELSLYDIAPVTPGVAVDLSHIPTDVKIKGFSGEDATPALEGADVVLISAGVARKPGMDRSDLFNVNAGIVKNLVQQIAKTCPQACIGVITNPVNTTVAIAAEVLKKAGVYDKNKLFGVTTLDIIRSNTFVAELKGKSATEVEVPVIGGHSGVTILPLLSQIPGVSFSDQEVADLTKRIQNAGTEVVEAKAGGGSATLSMGQAAARFGLSLVRAMQGEKGVVECAYVEGDGHYARFFSQPLLLGKNGVEERQSIGKLSAFEQQALEGMLDTLKKDIALGEDFVNK.

Residues 7–13 (GAAGGIG) and Asp-34 each bind NAD(+). Substrate is bound by residues Arg-81 and Arg-87. NAD(+) contacts are provided by residues Asn-94 and 117–119 (ITN). Residues Asn-119 and Arg-153 each coordinate substrate. His-177 acts as the Proton acceptor in catalysis. Met-227 is a binding site for NAD(+).

It belongs to the LDH/MDH superfamily. MDH type 1 family. In terms of assembly, homodimer.

It catalyses the reaction (S)-malate + NAD(+) = oxaloacetate + NADH + H(+). In terms of biological role, catalyzes the reversible oxidation of malate to oxaloacetate. The protein is Malate dehydrogenase of Klebsiella pneumoniae (strain 342).